A 275-amino-acid polypeptide reads, in one-letter code: Undecaprenyl-diphosphatase (275 aa).

The next 8 helical transmembrane spans lie at 4 to 24, 54 to 74, 92 to 112, 123 to 143, 154 to 174, 194 to 214, 228 to 248, and 255 to 275; these read IYGLVVALILGIVEGLTEFLP, LGSILAVIIICKQRWFLLFGL, LHLYHIILGLIPSSILGLMFY, YVMYSLILGSLLLLISQLIHD, ISYLQAFLIGCFQCFALLPGF, AFEFSFLLAVPMIFGATILDL, MFIIGFITAFLVALITIKLFW, and SFIPFVLYRFLLVIVFYLILI.

The protein belongs to the UppP family.

It localises to the cell membrane. The catalysed reaction is di-trans,octa-cis-undecaprenyl diphosphate + H2O = di-trans,octa-cis-undecaprenyl phosphate + phosphate + H(+). In terms of biological role, catalyzes the dephosphorylation of undecaprenyl diphosphate (UPP). Confers resistance to bacitracin. The sequence is that of Undecaprenyl-diphosphatase from Baumannia cicadellinicola subsp. Homalodisca coagulata.